Reading from the N-terminus, the 263-residue chain is Glutamate racemase (263 aa).

Substrate-binding positions include 10–11 (DS) and 42–43 (YG). The Proton donor/acceptor role is filled by cysteine 73. Residue 74–75 (NS) coordinates substrate. Cysteine 183 serves as the catalytic Proton donor/acceptor. Residue 184-185 (TH) coordinates substrate.

It belongs to the aspartate/glutamate racemases family.

It catalyses the reaction L-glutamate = D-glutamate. It participates in cell wall biogenesis; peptidoglycan biosynthesis. Its function is as follows. Provides the (R)-glutamate required for cell wall biosynthesis. This chain is Glutamate racemase, found in Acidothermus cellulolyticus (strain ATCC 43068 / DSM 8971 / 11B).